We begin with the raw amino-acid sequence, 143 residues long: Nucleoside diphosphate kinase (143 aa).

ATP is bound by residues Lys-11, Phe-59, Arg-87, Thr-93, Arg-104, and Asn-114. His-117 functions as the Pros-phosphohistidine intermediate in the catalytic mechanism.

This sequence belongs to the NDK family. Homotetramer. The cofactor is Mg(2+).

The protein localises to the cytoplasm. It carries out the reaction a 2'-deoxyribonucleoside 5'-diphosphate + ATP = a 2'-deoxyribonucleoside 5'-triphosphate + ADP. The catalysed reaction is a ribonucleoside 5'-diphosphate + ATP = a ribonucleoside 5'-triphosphate + ADP. In terms of biological role, major role in the synthesis of nucleoside triphosphates other than ATP. The ATP gamma phosphate is transferred to the NDP beta phosphate via a ping-pong mechanism, using a phosphorylated active-site intermediate. In Shewanella woodyi (strain ATCC 51908 / MS32), this protein is Nucleoside diphosphate kinase.